A 602-amino-acid polypeptide reads, in one-letter code: Aspartate--tRNA(Asp/Asn) ligase (602 aa).

Residue E170 participates in L-aspartate binding. The interval 194-197 is aspartate; that stretch reads QLFK. R216 is a binding site for L-aspartate. ATP contacts are provided by residues 216-218 and Q225; that span reads RDE. H448 is an L-aspartate binding site. Residue E482 coordinates ATP. R489 contributes to the L-aspartate binding site. 534–537 contributes to the ATP binding site; the sequence is GWDR. Residues 559–602 form a disordered region; sequence GGVDPLTSAPAPITAQQRKESGVDAKPEPKGDAAAAKPQVSAEK. Over residues 575–589 the composition is skewed to basic and acidic residues; the sequence is QRKESGVDAKPEPKG.

It belongs to the class-II aminoacyl-tRNA synthetase family. Type 1 subfamily. In terms of assembly, homodimer.

The protein localises to the cytoplasm. The enzyme catalyses tRNA(Asx) + L-aspartate + ATP = L-aspartyl-tRNA(Asx) + AMP + diphosphate. In terms of biological role, aspartyl-tRNA synthetase with relaxed tRNA specificity since it is able to aspartylate not only its cognate tRNA(Asp) but also tRNA(Asn). Reaction proceeds in two steps: L-aspartate is first activated by ATP to form Asp-AMP and then transferred to the acceptor end of tRNA(Asp/Asn). The polypeptide is Aspartate--tRNA(Asp/Asn) ligase (Rhodococcus opacus (strain B4)).